A 523-amino-acid chain; its full sequence is NAD(P)H-quinone oxidoreductase subunit 2 (523 aa).

A run of 14 helical transmembrane segments spans residues 29 to 49 (AIAP…VDLA), 57 to 77 (WVPP…AQQW), 94 to 114 (LAIS…LISW), 123 to 143 (PIGE…LLCG), 147 to 167 (LVSV…LAGY), 182 to 202 (LLVG…LYGL), 223 to 243 (AALS…AVPF), 255 to 275 (PTPV…ALAL), 291 to 311 (LLFT…ALAQ), 317 to 337 (MLAY…VCGT), 345 to 365 (VLYM…IILF), 389 to 409 (LGLS…GFFG), 424 to 444 (LLVV…ISVI), and 477 to 497 (IALV…NPLF).

The protein belongs to the complex I subunit 2 family. In terms of assembly, NDH-1 can be composed of about 15 different subunits; different subcomplexes with different compositions have been identified which probably have different functions.

The protein resides in the cellular thylakoid membrane. It carries out the reaction a plastoquinone + NADH + (n+1) H(+)(in) = a plastoquinol + NAD(+) + n H(+)(out). It catalyses the reaction a plastoquinone + NADPH + (n+1) H(+)(in) = a plastoquinol + NADP(+) + n H(+)(out). Its function is as follows. NDH-1 shuttles electrons from an unknown electron donor, via FMN and iron-sulfur (Fe-S) centers, to quinones in the respiratory and/or the photosynthetic chain. The immediate electron acceptor for the enzyme in this species is believed to be plastoquinone. Couples the redox reaction to proton translocation, and thus conserves the redox energy in a proton gradient. Cyanobacterial NDH-1 also plays a role in inorganic carbon-concentration. The polypeptide is NAD(P)H-quinone oxidoreductase subunit 2 (Prochlorococcus marinus (strain MIT 9313)).